The sequence spans 189 residues: GTP cyclohydrolase 1 (189 aa).

Cysteine 78, histidine 81, and cysteine 150 together coordinate Zn(2+).

The protein belongs to the GTP cyclohydrolase I family. Toroid-shaped homodecamer, composed of two pentamers of five dimers.

The enzyme catalyses GTP + H2O = 7,8-dihydroneopterin 3'-triphosphate + formate + H(+). The protein operates within cofactor biosynthesis; 7,8-dihydroneopterin triphosphate biosynthesis; 7,8-dihydroneopterin triphosphate from GTP: step 1/1. The sequence is that of GTP cyclohydrolase 1 from Bacillus pumilus (strain SAFR-032).